The following is a 95-amino-acid chain: uncharacterized protein (95 aa).

This is an uncharacterized protein from Caenorhabditis elegans.